The following is a 539-amino-acid chain: Berberine bridge enzyme-like 21 (539 aa).

The first 26 residues, 1–26, serve as a signal peptide directing secretion; the sequence is MIATQTFVSVFFFVFFLVSLPFFSSA. A disulfide bridge connects residues Cys41 and Cys104. A glycan (N-linked (GlcNAc...) asparagine) is linked at Asn79. Residues 82–256 form the FAD-binding PCMH-type domain; the sequence is STPKPAIIVT…LGYKVKLVPV (175 aa). Residues 119 to 181 constitute a cross-link (6-(S-cysteinyl)-8alpha-(pros-histidyl)-FAD (His-Cys)); sequence HDYEGLSYIS…KVHGFPAGVC (63 aa). Asn340 is a glycosylation site (N-linked (GlcNAc...) asparagine).

Belongs to the oxygen-dependent FAD-linked oxidoreductase family. FAD serves as cofactor. Post-translationally, the FAD cofactor is bound via a bicovalent 6-S-cysteinyl, 8alpha-N1-histidyl FAD linkage.

The protein localises to the secreted. Its subcellular location is the cell wall. In Arabidopsis thaliana (Mouse-ear cress), this protein is Berberine bridge enzyme-like 21.